Reading from the N-terminus, the 245-residue chain is DNA polymerase sliding clamp (245 aa).

It belongs to the PCNA family. Homotrimer. The subunits circularize to form a toroid; DNA passes through its center. Replication factor C (RFC) is required to load the toroid on the DNA.

In terms of biological role, sliding clamp subunit that acts as a moving platform for DNA processing. Responsible for tethering the catalytic subunit of DNA polymerase and other proteins to DNA during high-speed replication. In Methanosarcina acetivorans (strain ATCC 35395 / DSM 2834 / JCM 12185 / C2A), this protein is DNA polymerase sliding clamp.